Consider the following 147-residue polypeptide: Large ribosomal subunit protein bL9 (147 aa).

The protein belongs to the bacterial ribosomal protein bL9 family.

Its function is as follows. Binds to the 23S rRNA. The protein is Large ribosomal subunit protein bL9 of Phocaeicola vulgatus (strain ATCC 8482 / DSM 1447 / JCM 5826 / CCUG 4940 / NBRC 14291 / NCTC 11154) (Bacteroides vulgatus).